We begin with the raw amino-acid sequence, 115 residues long: Putative UPF0377 protein YHL045W (115 aa).

Residues 10–30 (ACIFIDSVCEGIVFWGLCLFV) traverse the membrane as a helical segment.

The protein belongs to the UPF0377 family.

The protein resides in the membrane. This Saccharomyces cerevisiae (strain ATCC 204508 / S288c) (Baker's yeast) protein is Putative UPF0377 protein YHL045W.